Consider the following 351-residue polypeptide: Dihydroorotate dehydrogenase (quinone) (351 aa).

Residues Ala-67–Lys-71 and Thr-91 contribute to the FMN site. Residue Lys-71 participates in substrate binding. A substrate-binding site is contributed by Asn-116–Phe-120. Asn-145 and Asn-178 together coordinate FMN. Asn-178 serves as a coordination point for substrate. Ser-181 functions as the Nucleophile in the catalytic mechanism. Asn-183 is a substrate binding site. FMN contacts are provided by Lys-214 and Thr-242. Asn-243–Thr-244 provides a ligand contact to substrate. FMN-binding positions include Gly-262, Gly-291, and Tyr-312–Ser-313.

Belongs to the dihydroorotate dehydrogenase family. Type 2 subfamily. As to quaternary structure, monomer. The cofactor is FMN.

It is found in the cell membrane. The enzyme catalyses (S)-dihydroorotate + a quinone = orotate + a quinol. The protein operates within pyrimidine metabolism; UMP biosynthesis via de novo pathway; orotate from (S)-dihydroorotate (quinone route): step 1/1. In terms of biological role, catalyzes the conversion of dihydroorotate to orotate with quinone as electron acceptor. In Helicobacter pylori (strain G27), this protein is Dihydroorotate dehydrogenase (quinone).